Here is a 360-residue protein sequence, read N- to C-terminus: Serine/threonine-protein phosphatase 2A activator 2 (360 aa).

The protein belongs to the PTPA-type PPIase family.

It localises to the cytoplasm. The catalysed reaction is [protein]-peptidylproline (omega=180) = [protein]-peptidylproline (omega=0). Functionally, PPIases accelerate the folding of proteins. It catalyzes the cis-trans isomerization of proline imidic peptide bonds in oligopeptides. Acts as a regulatory subunit for PP2A-like phosphatases modulating their activity or substrate specificity, probably by inducing a conformational change in the catalytic subunit, a direct target of the PPIase. Can reactivate inactive phosphatase PP2A-phosphatase methylesterase complexes (PP2Ai) in presence of ATP and Mg(2+) by dissociating the inactive form from the complex. This Kluyveromyces lactis (strain ATCC 8585 / CBS 2359 / DSM 70799 / NBRC 1267 / NRRL Y-1140 / WM37) (Yeast) protein is Serine/threonine-protein phosphatase 2A activator 2 (RRD2).